A 1383-amino-acid chain; its full sequence is DNA-directed RNA polymerase subunit beta'' (1383 aa).

Zn(2+) is bound by residues cysteine 220, cysteine 289, cysteine 296, and cysteine 299.

Belongs to the RNA polymerase beta' chain family. RpoC2 subfamily. In plastids the minimal PEP RNA polymerase catalytic core is composed of four subunits: alpha, beta, beta', and beta''. When a (nuclear-encoded) sigma factor is associated with the core the holoenzyme is formed, which can initiate transcription. Zn(2+) is required as a cofactor.

It is found in the plastid. Its subcellular location is the chloroplast. The catalysed reaction is RNA(n) + a ribonucleoside 5'-triphosphate = RNA(n+1) + diphosphate. In terms of biological role, DNA-dependent RNA polymerase catalyzes the transcription of DNA into RNA using the four ribonucleoside triphosphates as substrates. In Oenothera elata subsp. hookeri (Hooker's evening primrose), this protein is DNA-directed RNA polymerase subunit beta''.